The following is a 412-amino-acid chain: cAMP-dependent protein kinase regulatory subunit (412 aa).

A dimerization and phosphorylation region spans residues 1–142 (MSFEEVYEEL…RLKRSVAGNF (142 aa)). The Pseudophosphorylation motif signature appears at 101-105 (RRQSV). Residue Ser-104 is modified to Phosphoserine. 3',5'-cyclic AMP contacts are provided by residues 143 to 277 (LFKN…EEVP), Glu-224, Arg-233, 278 to 412 (ILSS…STKA), Glu-344, and Arg-353. A disordered region spans residues 392-412 (MGMDNEYGDQSLHRSPPSTKA).

The protein belongs to the cAMP-dependent kinase regulatory chain family. In terms of assembly, tetramer, composed of 2 regulatory (R) and 2 catalytic (C) subunits. In the presence of cAMP it dissociates into 2 active monomeric C subunits and an R dimer.

In Schizosaccharomyces pombe (strain 972 / ATCC 24843) (Fission yeast), this protein is cAMP-dependent protein kinase regulatory subunit (cgs1).